Consider the following 104-residue polypeptide: Large ribosomal subunit protein uL24 (104 aa).

It belongs to the universal ribosomal protein uL24 family. In terms of assembly, part of the 50S ribosomal subunit.

In terms of biological role, one of two assembly initiator proteins, it binds directly to the 5'-end of the 23S rRNA, where it nucleates assembly of the 50S subunit. Functionally, one of the proteins that surrounds the polypeptide exit tunnel on the outside of the subunit. In Pseudomonas aeruginosa (strain LESB58), this protein is Large ribosomal subunit protein uL24.